Here is a 269-residue protein sequence, read N- to C-terminus: Intercellular adhesion molecule 4 (269 aa).

The signal sequence occupies residues serine 1–serine 20. Over alanine 21–alanine 238 the chain is Extracellular. 2 Ig-like C2-type domains span residues glycine 60–alanine 122 and glycine 144–aspartate 215. N-linked (GlcNAc...) asparagine glycosylation is found at asparagine 66, asparagine 76, asparagine 188, and asparagine 221. 4 disulfide bridges follow: cysteine 67–cysteine 111, cysteine 67–cysteine 115, cysteine 71–cysteine 115, and cysteine 151–cysteine 208. The chain crosses the membrane as a helical span at residues leucine 239–leucine 259. Residues cysteine 260 to alanine 269 lie on the Cytoplasmic side of the membrane.

Belongs to the immunoglobulin superfamily. ICAM family. Post-translationally, N- and O-glycosylated.

The protein localises to the cell membrane. Its function is as follows. ICAM proteins are ligands for the leukocyte adhesion protein LFA-1 (integrin alpha-L/beta-2). ICAM4 is also a ligand for alpha-4/beta-1 and alpha-V integrins. The sequence is that of Intercellular adhesion molecule 4 (ICAM4) from Pan troglodytes (Chimpanzee).